A 261-amino-acid polypeptide reads, in one-letter code: Adenosylcobinamide-GDP ribazoletransferase (261 aa).

The next 5 membrane-spanning stretches (helical) occupy residues 31-51 (YAIC…FLTF), 59-79 (LGDI…SGGI), 125-145 (FGMV…FFVV), 183-203 (VIYL…LTVV), and 240-260 (LMAG…TGHW).

The protein belongs to the CobS family. Mg(2+) is required as a cofactor.

It is found in the cell membrane. The enzyme catalyses alpha-ribazole + adenosylcob(III)inamide-GDP = adenosylcob(III)alamin + GMP + H(+). It carries out the reaction alpha-ribazole 5'-phosphate + adenosylcob(III)inamide-GDP = adenosylcob(III)alamin 5'-phosphate + GMP + H(+). The protein operates within cofactor biosynthesis; adenosylcobalamin biosynthesis; adenosylcobalamin from cob(II)yrinate a,c-diamide: step 7/7. Joins adenosylcobinamide-GDP and alpha-ribazole to generate adenosylcobalamin (Ado-cobalamin). Also synthesizes adenosylcobalamin 5'-phosphate from adenosylcobinamide-GDP and alpha-ribazole 5'-phosphate. The polypeptide is Adenosylcobinamide-GDP ribazoletransferase (Lachnoclostridium phytofermentans (strain ATCC 700394 / DSM 18823 / ISDg) (Clostridium phytofermentans)).